Consider the following 372-residue polypeptide: Putative KilA-N domain-containing protein L32 (372 aa).

Positions 1–12 are enriched in basic residues; sequence MPHKAPKSKLFR. Positions 1-129 are disordered; the sequence is MPHKAPKSKL…SDNDKSKDNF (129 aa). The segment covering 14 to 36 has biased composition (basic and acidic residues); sequence RYVEDSDDETRGRSRNRSVEKSR. Residues 37–53 show a composition bias toward basic residues; the sequence is SKSLTRSKSKSPKKSRS. The segment covering 79-120 has biased composition (acidic residues); that stretch reads EDSEDSEDSESDQDDDKSDNEQSDSELDDSESDDDETDDNES. The 105-residue stretch at 151–255 folds into the KilA-N domain; the sequence is KFAIGKFGDF…IKIGEWIEEW (105 aa).

This is Putative KilA-N domain-containing protein L32 from Acanthamoeba polyphaga (Amoeba).